We begin with the raw amino-acid sequence, 83 residues long: Cytochrome b559 subunit alpha (83 aa).

The chain crosses the membrane as a helical span at residues 21 to 35 (VIHSITIPSLFIAGW). His23 lines the heme pocket.

The protein belongs to the PsbE/PsbF family. Heterodimer of an alpha subunit and a beta subunit. PSII is composed of 1 copy each of membrane proteins PsbA, PsbB, PsbC, PsbD, PsbE, PsbF, PsbH, PsbI, PsbJ, PsbK, PsbL, PsbM, PsbT, PsbX, PsbY, PsbZ, Psb30/Ycf12, at least 3 peripheral proteins of the oxygen-evolving complex and a large number of cofactors. It forms dimeric complexes. The cofactor is heme b.

The protein localises to the plastid membrane. In terms of biological role, this b-type cytochrome is tightly associated with the reaction center of photosystem II (PSII). PSII is a light-driven water:plastoquinone oxidoreductase that uses light energy to abstract electrons from H(2)O, generating O(2) and a proton gradient subsequently used for ATP formation. It consists of a core antenna complex that captures photons, and an electron transfer chain that converts photonic excitation into a charge separation. The chain is Cytochrome b559 subunit alpha from Cuscuta reflexa (Southern Asian dodder).